Reading from the N-terminus, the 172-residue chain is uncharacterized protein (172 aa).

Residues Met-1–Ala-28 show a composition bias toward low complexity. The disordered stretch occupies residues Met-1–Gly-172. Positions Pro-58 to His-68 are enriched in basic residues. Positions Thr-80–Arg-100 are enriched in gly residues. Over residues Pro-129–Ala-138 the composition is skewed to low complexity. Residues Pro-139–Arg-165 show a composition bias toward gly residues.

This is an uncharacterized protein from Homo sapiens (Human).